The primary structure comprises 1755 residues: Transposon Ty1-NL1 Gag-Pol polyprotein (1755 aa).

Composition is skewed to polar residues over residues 1–23 (MESQ…SVTS), 48–60 (TKAN…TPAS), 71–86 (SPQT…GPYQ), and 131–152 (PQYP…GNTF). Disordered regions lie at residues 1–86 (MESQ…GPYQ), 131–171 (PQYP…YVRP), and 350–420 (QQES…IRGS). Residues 153 to 165 (TDSSSADSDMTST) show a composition bias toward low complexity. Positions 299-401 (NNGIPINNKV…NSQSRTARAH (103 aa)) are RNA-binding. Basic and acidic residues predominate over residues 363–372 (NPSDEKKDSR). Positions 373–412 (TYTNTTKPKSITRNSQKPNNSQSRTARAHNVSTSNNSSGP) are enriched in polar residues. The active-site For protease activity; shared with dimeric partner is the Asp461. The tract at residues 583–640 (NVHTSESTRKYPYPFIHRMLAHANAQTIRYSLKNNTITYFNESDVDWSSAIDYQCPDC) is integrase-type zinc finger-like. The region spanning 660 to 835 (NSYEPFQYLH…AGLDISTLLP (176 aa)) is the Integrase catalytic domain. 2 residues coordinate Mg(2+): Asp671 and Asp736. 2 disordered regions span residues 956 to 1120 (SKAV…TCPK) and 1146 to 1172 (DSFK…SNAY). Residues 960 to 969 (SPTDSTPPST) are compositionally biased toward low complexity. Residues 1005-1015 (STPQISDIEST) show a composition bias toward polar residues. Over residues 1038–1053 (ESSHTSKSKDFRHSDS) the composition is skewed to basic and acidic residues. Composition is skewed to polar residues over residues 1054–1082 (YSDN…QTSE) and 1095–1106 (SIDTSSSESNSL). Residues 1178–1212 (KKRSLEDNETEIKVSRDTWNTKNMRSLEPPRSKKR) carry the Bipartite nuclear localization signal motif. Residues 1338-1476 (NNYYITQLDI…DILGLEIKYQ (139 aa)) enclose the Reverse transcriptase Ty1/copia-type domain. The Mg(2+) site is built by Asp1346, Asp1427, Asp1428, Asp1610, Glu1652, and Asp1685. Residues 1610–1752 (DASYGNQPYY…IKTFKLLTNK (143 aa)) enclose the RNase H Ty1/copia-type domain.

As to quaternary structure, the capsid protein forms a homotrimer, from which the VLPs are assembled. The protease is a homodimer, whose active site consists of two apposed aspartic acid residues. In terms of processing, initially, virus-like particles (VLPs) are composed of the structural unprocessed proteins Gag and Gag-Pol, and also contain the host initiator methionine tRNA (tRNA(i)-Met) which serves as a primer for minus-strand DNA synthesis, and a dimer of genomic Ty RNA. Processing of the polyproteins occurs within the particle and proceeds by an ordered pathway, called maturation. First, the protease (PR) is released by autocatalytic cleavage of the Gag-Pol polyprotein yielding capsid protein p45 and a Pol-p154 precursor protein. This cleavage is a prerequisite for subsequent processing of Pol-p154 at the remaining sites to release the mature structural and catalytic proteins. Maturation takes place prior to the RT reaction and is required to produce transposition-competent VLPs.

The protein resides in the cytoplasm. It is found in the nucleus. The catalysed reaction is DNA(n) + a 2'-deoxyribonucleoside 5'-triphosphate = DNA(n+1) + diphosphate. It catalyses the reaction Endonucleolytic cleavage to 5'-phosphomonoester.. Capsid protein (CA) is the structural component of the virus-like particle (VLP), forming the shell that encapsulates the retrotransposons dimeric RNA genome. The particles are assembled from trimer-clustered units and there are holes in the capsid shells that allow for the diffusion of macromolecules. CA also has nucleocapsid-like chaperone activity, promoting primer tRNA(i)-Met annealing to the multipartite primer-binding site (PBS), dimerization of Ty1 RNA and initiation of reverse transcription. Its function is as follows. The aspartyl protease (PR) mediates the proteolytic cleavages of the Gag and Gag-Pol polyproteins after assembly of the VLP. In terms of biological role, reverse transcriptase/ribonuclease H (RT) is a multifunctional enzyme that catalyzes the conversion of the retro-elements RNA genome into dsDNA within the VLP. The enzyme displays a DNA polymerase activity that can copy either DNA or RNA templates, and a ribonuclease H (RNase H) activity that cleaves the RNA strand of RNA-DNA heteroduplexes during plus-strand synthesis and hydrolyzes RNA primers. The conversion leads to a linear dsDNA copy of the retrotransposon that includes long terminal repeats (LTRs) at both ends. Functionally, integrase (IN) targets the VLP to the nucleus, where a subparticle preintegration complex (PIC) containing at least integrase and the newly synthesized dsDNA copy of the retrotransposon must transit the nuclear membrane. Once in the nucleus, integrase performs the integration of the dsDNA into the host genome. In Saccharomyces cerevisiae (strain ATCC 204508 / S288c) (Baker's yeast), this protein is Transposon Ty1-NL1 Gag-Pol polyprotein (TY1B-NL1).